The chain runs to 344 residues: DNA polymerase IV (344 aa).

One can recognise a UmuC domain in the interval 2–183 (IMLIDFDYFF…IKINDIPGIG (182 aa)). Mg(2+) is bound by residues aspartate 6 and aspartate 105. Glutamate 106 is an active-site residue.

Belongs to the DNA polymerase type-Y family. As to quaternary structure, monomer. It depends on Mg(2+) as a cofactor.

The protein resides in the cytoplasm. The catalysed reaction is DNA(n) + a 2'-deoxyribonucleoside 5'-triphosphate = DNA(n+1) + diphosphate. Poorly processive, error-prone DNA polymerase involved in untargeted mutagenesis. Copies undamaged DNA at stalled replication forks, which arise in vivo from mismatched or misaligned primer ends. These misaligned primers can be extended by PolIV. Exhibits no 3'-5' exonuclease (proofreading) activity. May be involved in translesional synthesis. The protein is DNA polymerase IV of Picrophilus torridus (strain ATCC 700027 / DSM 9790 / JCM 10055 / NBRC 100828 / KAW 2/3).